The following is a 276-amino-acid chain: 3-methyl-2-oxobutanoate hydroxymethyltransferase (276 aa).

2 residues coordinate Mg(2+): Asp-50 and Asp-89. Residues 50–51, Asp-89, and Lys-119 contribute to the 3-methyl-2-oxobutanoate site; that span reads DS. Glu-121 contributes to the Mg(2+) binding site. Glu-188 (proton acceptor) is an active-site residue.

The protein belongs to the PanB family. As to quaternary structure, homodecamer; pentamer of dimers. It depends on Mg(2+) as a cofactor.

It is found in the cytoplasm. The catalysed reaction is 3-methyl-2-oxobutanoate + (6R)-5,10-methylene-5,6,7,8-tetrahydrofolate + H2O = 2-dehydropantoate + (6S)-5,6,7,8-tetrahydrofolate. It functions in the pathway cofactor biosynthesis; (R)-pantothenate biosynthesis; (R)-pantoate from 3-methyl-2-oxobutanoate: step 1/2. In terms of biological role, catalyzes the reversible reaction in which hydroxymethyl group from 5,10-methylenetetrahydrofolate is transferred onto alpha-ketoisovalerate to form ketopantoate. The chain is 3-methyl-2-oxobutanoate hydroxymethyltransferase from Paracoccus denitrificans (strain Pd 1222).